The following is a 115-amino-acid chain: Glutaredoxin-like protein C5orf63 homolog (115 aa).

An intrachain disulfide couples Cys40 to Cys43.

This sequence belongs to the glutaredoxin family. YDR286C subfamily.

The protein is Glutaredoxin-like protein C5orf63 homolog of Mus musculus (Mouse).